A 278-amino-acid chain; its full sequence is Lipoyl-[GcvH]:protein N-lipoyltransferase (278 aa).

In terms of domain architecture, BPL/LPL catalytic spans 44-250 (RMAPSTVRGW…SLRHYAGDLV (207 aa)). Cysteine 149 acts as the Acyl-thioester intermediate in catalysis.

This sequence belongs to the octanoyltransferase LipL family.

It carries out the reaction N(6)-[(R)-lipoyl]-L-lysyl-[glycine-cleavage complex H protein] + L-lysyl-[lipoyl-carrier protein] = L-lysyl-[glycine-cleavage complex H protein] + N(6)-[(R)-lipoyl]-L-lysyl-[lipoyl-carrier protein]. Its pathway is protein modification; protein lipoylation via exogenous pathway. Functionally, catalyzes the amidotransfer (transamidation) of the lipoyl moiety from lipoyl-GcvH to the lipoyl domain of the E2 subunit of lipoate-dependent enzymes. Takes part in a pathway for scavenging of lipoic acid derived from eukaryotic host cells. Cannot use lipoyl-tripeptide (DK(L)A), lipoamide (LD), or free lipoate as substrate. The sequence is that of Lipoyl-[GcvH]:protein N-lipoyltransferase from Listeria monocytogenes serovar 1/2a (strain ATCC BAA-679 / EGD-e).